Here is a 337-residue protein sequence, read N- to C-terminus: Pentalenene synthase (337 aa).

Residues aspartate 80, aspartate 84, asparagine 219, serine 223, and glutamate 227 each contribute to the Mg(2+) site. Residues 80 to 84 (DDLFD) carry the DDXXD motif motif.

Belongs to the terpene synthase family. As to quaternary structure, monomer. Mg(2+) serves as cofactor.

It catalyses the reaction (2E,6E)-farnesyl diphosphate = pentalenene + diphosphate. Its pathway is sesquiterpene biosynthesis; pentalenene biosynthesis; pentalenene from farnesyl diphosphate: step 1/1. It functions in the pathway antibiotic biosynthesis; pentalenolactone biosynthesis. Functionally, catalyzes the cyclization of farnesyl diphosphate (FPP) to the tricyclic sesquiterpene pentalenene, which is the hydrocarbon precursor of the pentalenolactone family of antibiotics produced by a variety of Streptomyces species. In Streptomyces arenae, this protein is Pentalenene synthase (pntA).